The primary structure comprises 170 residues: Peptide deformylase (170 aa).

Residues C94 and H136 each coordinate Fe cation. E137 is an active-site residue. Fe cation is bound at residue H140.

This sequence belongs to the polypeptide deformylase family. Fe(2+) serves as cofactor.

The catalysed reaction is N-terminal N-formyl-L-methionyl-[peptide] + H2O = N-terminal L-methionyl-[peptide] + formate. Functionally, removes the formyl group from the N-terminal Met of newly synthesized proteins. Requires at least a dipeptide for an efficient rate of reaction. N-terminal L-methionine is a prerequisite for activity but the enzyme has broad specificity at other positions. The polypeptide is Peptide deformylase (Wolinella succinogenes (strain ATCC 29543 / DSM 1740 / CCUG 13145 / JCM 31913 / LMG 7466 / NCTC 11488 / FDC 602W) (Vibrio succinogenes)).